We begin with the raw amino-acid sequence, 301 residues long: uncharacterized protein (301 aa).

Catalysis depends on charge relay system residues Ser-44 and Tyr-107. The active-site Proton donor is the Tyr-133. Lys-162 functions as the Schiff-base intermediate with substrate in the catalytic mechanism.

It belongs to the DapA family. Homotetramer.

The protein resides in the cytoplasm. This is an uncharacterized protein from Pyrobaculum neutrophilum (strain DSM 2338 / JCM 9278 / NBRC 100436 / V24Sta) (Thermoproteus neutrophilus).